We begin with the raw amino-acid sequence, 281 residues long: RAD52 motif-containing protein 1 (281 aa).

Positions 1-92 are necessary for nuclear localization and for nucleolar accumulation in response to heat shock; that stretch reads MAELISFVVP…KPLFQTSPVK (92 aa). The RRM domain maps to 15-98; it reads KVLLVWDLST…SPVKVRLGTR (84 aa). Residues 90-133 are necessary for nuclear and nucleolar localization; it reads PVKVRLGTRHKALQHQAFALNSSRCQELANYYFGFSGWSKRIIK.

Homodimer.

Its subcellular location is the nucleus. It is found in the cytoplasm. The protein localises to the nucleolus. The protein resides in the cajal body. It localises to the PML body. Its function is as follows. May confer resistance to the antitumor agent cisplatin. Binds to DNA and RNA. This is RAD52 motif-containing protein 1 (Rdm1) from Mus musculus (Mouse).